The chain runs to 208 residues: Small ribosomal subunit protein uS4 (208 aa).

The 63-residue stretch at 98–160 folds into the S4 RNA-binding domain; it reads SRLDNVAYNM…AKSYLRIKSS (63 aa).

This sequence belongs to the universal ribosomal protein uS4 family. Part of the 30S ribosomal subunit. Contacts protein S5. The interaction surface between S4 and S5 is involved in control of translational fidelity.

In terms of biological role, one of the primary rRNA binding proteins, it binds directly to 16S rRNA where it nucleates assembly of the body of the 30S subunit. With S5 and S12 plays an important role in translational accuracy. The polypeptide is Small ribosomal subunit protein uS4 (Nitrosomonas eutropha (strain DSM 101675 / C91 / Nm57)).